Here is a 495-residue protein sequence, read N- to C-terminus: UDP-glycosyltransferase 73C6 (495 aa).

UDP-alpha-D-glucose is bound by residues serine 296, 356–358 (SPQ), 373–381 (HCGWNSTLE), and 395–398 (FADQ). The disordered stretch occupies residues 449–475 (SDDAKERRRRAKELGESAHKAVEEGGS). The span at 450–471 (DDAKERRRRAKELGESAHKAVE) shows a compositional bias: basic and acidic residues.

Belongs to the UDP-glycosyltransferase family. Expressed in leaves and flowers, and at a very low level in roots.

Functionally, acts as a UDP-glucose:flavonol-3-O-glycoside-7-O-glucosyltransferase. 6- and 7-hydroxyflavone, but not 3- or 5-hydroxyflavone are accepted as substrates. Possesses low quercetin 3-O-glucosyltransferase, 7-O-glucosyltransferase and 4'-O-glucosyltransferase activities in vitro. The chain is UDP-glycosyltransferase 73C6 (UGT73C6) from Arabidopsis thaliana (Mouse-ear cress).